Here is a 336-residue protein sequence, read N- to C-terminus: Cytochrome P450 monooxygenase lcsN (336 aa).

Cys271 contributes to the heme binding site.

Belongs to the cytochrome P450 family. The cofactor is heme.

It functions in the pathway secondary metabolite biosynthesis. In terms of biological role, cytochrome P450 monooxygenase; part of the gene cluster that mediates the biosynthesis of the lipopeptide antibiotics leucinostatins that show extensive biological activities, including antimalarial, antiviral, antibacterial, antifungal, and antitumor activities, as well as phytotoxic. Leucinostatin A contains nine amino acid residues, including the unusual amino acid 4-methyl-L-proline (MePro), 2-amino-6-hydroxy-4-methyl-8-oxodecanoic acid (AHyMeOA), 3-hydroxyleucine (HyLeu), alpha-aminoisobutyric acid (AIB), beta-Ala, a 4-methylhex-2-enoic acid at the N-terminus as well as a N1,N1-dimethylpropane-1,2-diamine (DPD) at the C-terminus. The biosynthesis of leucinostatins is probably initiated with the assembly of 4-methylhex-2-enoic acid by a reducing PKS. Two reducing polyketide synthases, lcsB and lcsC, have been identified in the cluster and it is not clear which is the one that assembles 4-methylhex-2-enoic acid since both contain KS, AT, DH, cMT, ER, KR and ACP domains. The polyketide residue might be transferred to the NRPS lcsA, mediated by two additional enzymes, the acyl-CoA ligase lcsD and the thioesterase lcsE. The linear polyketide carboxylic acid, which is released from PKS, is converted to a CoA thioester by lcsD, and then lcsE hydrolyzes the thiol bond and shuttles the polyketide intermediate to lcsA. The C domain of the first module catalyzed the condensation of 4-methylhex-2-enoic acid and MePro carried by domain A1, followed by successive condensations of nine amino acids to trigger the elongation of the linear peptide. A5 and A6 domains of lcsA are proposed to incorporate leucine, A2 AHyMeOA, and A3 incorporates HyLeu. A4, A7 and A8 incorporate AIB. The AHyMeOA in leucinostatin A activated by the A2 might be produced by the second PKS (lcsB or lcsC) present within the cluster. The MePro is probably produced via leucine cyclization and may originate from a separate pathway, independent of the cluster. Another nonproteinogenic amino acid, beta-Ala, could be produced by an aspartic acid decarboxylase also localized outside of the cluster. Two candidates are VFPBJ_01400 and VFPBJ_10476. The final peptide scaffold may be released by the NAD(P)H-dependent thioester reductase (TE) at the C-terminal region of lcsA. Transamination of the lcsA product by the transaminase lcsP may produce DPD at the C-terminus. Further hydroxylation steps performed alternatively by the cytochrome P450 monooxygenases lcsI, lcsK and lcsN then yield the non-methylated leucinostatins precursor. It is also possible that leucines can be hydroxylated prior to their incorporation into the peptide. Varying extents of methylation then lead to the formation of leucinostatins A and B. In Purpureocillium lilacinum (Paecilomyces lilacinus), this protein is Cytochrome P450 monooxygenase lcsN.